Reading from the N-terminus, the 408-residue chain is Multidrug resistance protein MdtG (408 aa).

11 helical membrane-spanning segments follow: residues 16 to 36 (LIVAWLGCFLTGAAFSLVMPF), 58 to 78 (IVFSITFLFSAIASPFWGGLA), 92 to 112 (LGMGIVMVLMGLAQNIWQFLI), 115 to 135 (ALLGLLGGFVPNANALIATQV), 146 to 166 (TLSTGGVSGALLGPMAGGLLA), 173 to 193 (PVFFITASVLILCFFVTLFCI), 224 to 244 (LFVTTLIIQVATGSIAPILTL), 256 to 276 (VAFISGMIASVPGVAALLSAP), 290 to 310 (ILITALIFSVLLLIPMSYVQT), 319 to 339 (FLLGAADGALLPAVQTLLVYN), and 378 to 398 (AVFLVTAGVVLFNAVYSWNSL).

Belongs to the major facilitator superfamily. DHA1 family. MdtG (TC 2.A.1.2.20) subfamily.

The protein resides in the cell inner membrane. Confers resistance to fosfomycin and deoxycholate. The polypeptide is Multidrug resistance protein MdtG (Escherichia coli O139:H28 (strain E24377A / ETEC)).